Here is a 94-residue protein sequence, read N- to C-terminus: Ammonia regulation of amino acid uptake protein (94 aa).

2 repeats span residues 48 to 57 and 58 to 67; these read HHQIRRRTHQ.

Its function is as follows. Involved in ammonia regulation of the GAP1 permease. The sequence is that of Ammonia regulation of amino acid uptake protein (AUA1) from Saccharomyces cerevisiae (strain ATCC 204508 / S288c) (Baker's yeast).